Consider the following 578-residue polypeptide: Vi polysaccharide biosynthesis protein VipC/TviE (578 aa).

It participates in glycan metabolism; Vi-antigen biosynthesis. It functions in the pathway capsule biogenesis; capsule polysaccharide biosynthesis. This is Vi polysaccharide biosynthesis protein VipC/TviE (vipC) from Salmonella typhi.